The primary structure comprises 215 residues: Large ribosomal subunit protein uL4 (215 aa).

Positions 46–72 are disordered; sequence TAKSKNRAEVSGGGRKPWAQKGGGRAR. Over residues 56 to 71 the composition is skewed to gly residues; the sequence is SGGGRKPWAQKGGGRA.

It belongs to the universal ribosomal protein uL4 family. Part of the 50S ribosomal subunit.

Functionally, one of the primary rRNA binding proteins, this protein initially binds near the 5'-end of the 23S rRNA. It is important during the early stages of 50S assembly. It makes multiple contacts with different domains of the 23S rRNA in the assembled 50S subunit and ribosome. In terms of biological role, forms part of the polypeptide exit tunnel. This Helicobacter pylori (strain J99 / ATCC 700824) (Campylobacter pylori J99) protein is Large ribosomal subunit protein uL4.